The primary structure comprises 430 residues: Probable FAD-dependent monooxygenase (430 aa).

The signal sequence occupies residues 1–23; the sequence is MGSTSTPPHVLIIGAGITGLALA. 9-37 is an FAD binding site; it reads HVLIIGAGITGLALAQALRKHGVSFAVYE. 2 N-linked (GlcNAc...) asparagine glycosylation sites follow: Asn-130 and Asn-151. 307 to 330 is a binding site for FAD; it reads LEDWPTPPKGSWSNLGGTATLVGD.

The cofactor is FAD.

The protein is Probable FAD-dependent monooxygenase of Arthroderma benhamiae (strain ATCC MYA-4681 / CBS 112371) (Trichophyton mentagrophytes).